The following is a 126-amino-acid chain: Penton protein P31 (126 aa).

It is found in the virion. In association with P2 and trimeric P5, forms the spike complexes located at the 5-fold vertices of the capsid. Essential for viral infectivity. The chain is Penton protein P31 (XXXI) from Acinetobacter calcoaceticus (Arthrobacter siderocapsulatus).